The chain runs to 138 residues: ATP synthase epsilon chain (138 aa).

This sequence belongs to the ATPase epsilon chain family. As to quaternary structure, F-type ATPases have 2 components, CF(1) - the catalytic core - and CF(0) - the membrane proton channel. CF(1) has five subunits: alpha(3), beta(3), gamma(1), delta(1), epsilon(1). CF(0) has three main subunits: a, b and c.

The protein resides in the cell inner membrane. Functionally, produces ATP from ADP in the presence of a proton gradient across the membrane. The chain is ATP synthase epsilon chain from Polaromonas sp. (strain JS666 / ATCC BAA-500).